A 407-amino-acid polypeptide reads, in one-letter code: MPKSSSNNPCPPGEILREGYYRHGYERRGFKRSSGTYIPPTEVSEAYVPPTCIIDRGKPGKGPRILPKPGNDLHLSWYGYAVHEPERDRHRALVEASQENDPLEVLRRLNLLRNYQAYPDVKDIMSQDVKFMSDFYAKYKERNQEANRFGRSNSRSRSNSRSKSSRSRSNNRSKSSRSSSTQSKSNNRSNSRSNSKTSRRLKKLPENDLDLDQDGGNRYGGDPLTSITSDTTGNQILETNIKLSKETECSEGKCQVFNKVYESHTINGKKIVFETLDQNDSENVLSLDKLYLDSDQTIDRVRQNLSTNKGYIIGIKSDNKLEGYCWYKEISNNEVKIFWFCANKGYGTALYTFMEKYFKLNNYSRIVIDVSMEGSYAVRRINFWNHQGFKTYQVKTDNHKIHMEKDI.

Residues 145–231 (EANRFGRSNS…DPLTSITSDT (87 aa)) form a disordered region. Over residues 158–175 (SNSRSKSSRSRSNNRSKS) the composition is skewed to basic residues. The segment covering 176 to 196 (SRSSSTQSKSNNRSNSRSNSK) has biased composition (low complexity). Residues 271-407 (IVFETLDQND…NHKIHMEKDI (137 aa)) form the N-acetyltransferase domain.

The protein localises to the virion. This is an uncharacterized protein from Acanthamoeba polyphaga (Amoeba).